Reading from the N-terminus, the 1563-residue chain is Ribulose bisphosphate carboxylase (1563 aa).

Positions 32 and 79 each coordinate substrate. Residues 197-217 (LAAAFVGASTTRKASSVARRA) constitute a propeptide, linker. Residue Asn-328 coordinates substrate. Catalysis depends on Lys-383, which acts as the Proton acceptor. Residue Lys-385 participates in substrate binding. The Mg(2+) site is built by Lys-408, Asp-410, and Glu-411. Lys-408 carries the post-translational modification N6-carboxylysine. His-504 serves as the catalytic Proton acceptor. Substrate is bound by residues Arg-505, His-538, and Ser-585. Positions 703–723 (LAAAFVGASTTRKASSVARRA) are cleaved as a propeptide — linker. Position 834 (Asn-834) interacts with substrate. Lys-889 acts as the Proton acceptor in catalysis. Lys-891 provides a ligand contact to substrate. Residues Lys-914, Asp-916, and Glu-917 each coordinate Mg(2+). Residue Lys-914 is modified to N6-carboxylysine. The active-site Proton acceptor is His-1010. Substrate is bound by residues Arg-1011, His-1044, and Ser-1091. Residues 1209–1229 (LAAAFVGASTTRKASSVARRA) constitute a propeptide, linker. Asn-1340 contacts substrate. Lys-1395 functions as the Proton acceptor in the catalytic mechanism. Residue Lys-1397 participates in substrate binding. Mg(2+)-binding residues include Lys-1420, Asp-1422, and Glu-1423. The residue at position 1420 (Lys-1420) is an N6-carboxylysine. The Proton acceptor role is filled by His-1516. Residues Arg-1517 and His-1550 each coordinate substrate.

It belongs to the RuBisCO large chain family. Type II subfamily. In terms of assembly, homodimer. It depends on Mg(2+) as a cofactor. In Western blots an approximately 220 kDa polyprotein and 2 smaller proteins of about 55 and 52 kDa are detected, suggesting the polyprotein may be cleaved at one end of the linker and then at the other end to give mature RuBisCO.

It localises to the plastid. It is found in the chloroplast. It catalyses the reaction 2 (2R)-3-phosphoglycerate + 2 H(+) = D-ribulose 1,5-bisphosphate + CO2 + H2O. The catalysed reaction is D-ribulose 1,5-bisphosphate + O2 = 2-phosphoglycolate + (2R)-3-phosphoglycerate + 2 H(+). Its function is as follows. RuBisCO catalyzes two reactions: the carboxylation of D-ribulose 1,5-bisphosphate, the primary event in carbon dioxide fixation, as well as the oxidative fragmentation of the pentose substrate. Both reactions occur simultaneously and in competition at the same active site. The protein is Ribulose bisphosphate carboxylase (rbcL) of Prorocentrum minimum (Dinoflagellate).